A 282-amino-acid chain; its full sequence is MKYGNLMMTKKKLLIGMVTISGIVILGSCGKTETVNELLIVDQCNDVRDLCRLELANAQVSRYTNFLGKTIKRLQSQTPLRDIQGTVTWNASAGTSLADNSDVQSELGLSCQDDNCTANSNSTAYTLPVGSNTISVSGTVTVDGKTIDLATDVPALVINTSAAGSSVHVFPTELEGNLTLQDLVDSLNQGRHYAHATFSADGSNLKIQCDPGYVWLDDINPEYGGQSSAASARSVAMVSWVEELEEFRVDEFRFLHFDMSSLTLNGVRLGNHVFWEMGCWPT.

A signal peptide spans 1–28; that stretch reads MKYGNLMMTKKKLLIGMVTISGIVILGS. A lipid anchor (N-palmitoyl cysteine) is attached at C29. The S-diacylglycerol cysteine moiety is linked to residue C29.

Its subcellular location is the cell membrane. Stimulates the host immune inflammatory signaling system allowing the host to combat the bacteria. Stimulates mouse interleukin-6 (Il6) production. The sequence is that of Bacterial lipoprotein FTN_1103 from Francisella tularensis subsp. novicida (strain U112).